The chain runs to 793 residues: MAAGRPVRGPELAPRRLLQLLLLVLLGGPGRGAALSGNVTGPGPHSASGSSRRDVPVTSPPPPLLSHCGRAAHCEPLRYNVCLGSALPYGATTTLLAGDSDSQEEAHGKLVLWSGLRNAPRCWAVIQPLLCAVYMPKCENDRVELPSRTLCQATRGPCAIVERERGWPDFLRCTPDHFPEGCPNEVQNIKFNSSGQCEAPLVRTDNPKSWYEDVEGCGIQCQNPLFTEAEHQDMHSYIAAFGAVTGLCTLFTLATFVADWRNSNRYPAVILFYVNACFFVGSIGWLAQFMDGARREIVCRADGTMRFGEPTSSETLSCVIIFVIVYYALMAGVVWFVVLTYAWHTSFKALGTTYQPLSGKTSYFHLLTWSLPFVLTVAILAVAQVDGDSVSGICFVGYKNYRYRAGFVLAPIGLVLIVGGYFLIRGVMTLFSIKSNHPGLLSEKAASKINETMLRLGIFGFLAFGFVLITFSCHFYDFFNQAEWERSFRDYVLCQANVTIGLPTKKPIPDCEIKNRPSLLVEKINLFAMFGTGIAMSTWVWTKATLLIWRRTWCRLTGHSDDEPKRIKKSKMIAKAFSKRRELLQNPGQELSFSMHTVSHDGPVAGLAFDLNEPSADVSSAWAQHVTKMVARRGAILPQDVSVTPVATPVPPEEQANMWLVEAEISPELEKRLGRKKKRRKRKKEVCPLRPAPELHHSAPVPATSAVPRLPQLPRQKCLVAANAWGTGESCRQGAWTLVSNPFCPEPSPHQDPFLPGASAPRVWAQGRLQGLGSIHSRTNLMEAEILDADSDF.

The N-terminal stretch at 1–32 (MAAGRPVRGPELAPRRLLQLLLLVLLGGPGRG) is a signal peptide. Over 33–237 (AALSGNVTGP…EAEHQDMHSY (205 aa)) the chain is Extracellular. A disordered region spans residues 35-61 (LSGNVTGPGPHSASGSSRRDVPVTSPP). A glycan (N-linked (GlcNAc...) asparagine) is linked at Asn38. Intrachain disulfides connect Cys68–Cys182, Cys74–Cys138, Cys82–Cys131, Cys122–Cys158, and Cys151–Cys173. The FZ domain maps to 69–185 (GRAAHCEPLR…DHFPEGCPNE (117 aa)). Asp99 contacts cholesterol. An N-linked (GlcNAc...) asparagine glycan is attached at Asn192. 3 disulfides stabilise this stretch: Cys197-Cys217, Cys221-Cys299, and Cys318-Cys394. A helical transmembrane segment spans residues 238 to 258 (IAAFGAVTGLCTLFTLATFVA). Topologically, residues 259 to 265 (DWRNSNR) are cytoplasmic. Residues 266-286 (YPAVILFYVNACFFVGSIGWL) form a helical membrane-spanning segment. Over 287–318 (AQFMDGARREIVCRADGTMRFGEPTSSETLSC) the chain is Extracellular. The helical transmembrane segment at 319–339 (VIIFVIVYYALMAGVVWFVVL) threads the bilayer. Residues 340–362 (TYAWHTSFKALGTTYQPLSGKTS) are Cytoplasmic-facing. Residues 363-383 (YFHLLTWSLPFVLTVAILAVA) form a helical membrane-spanning segment. The Extracellular segment spans residues 384–406 (QVDGDSVSGICFVGYKNYRYRAG). Tyr398 is a cholesterol binding site. Residues 407–427 (FVLAPIGLVLIVGGYFLIRGV) form a helical membrane-spanning segment. Over 428-455 (MTLFSIKSNHPGLLSEKAASKINETMLR) the chain is Cytoplasmic. The helical transmembrane segment at 456 to 476 (LGIFGFLAFGFVLITFSCHFY) threads the bilayer. The Extracellular portion of the chain corresponds to 477–528 (DFFNQAEWERSFRDYVLCQANVTIGLPTKKPIPDCEIKNRPSLLVEKINLFA). Residues Cys494 and Cys511 are joined by a disulfide bond. Asn497 carries N-linked (GlcNAc...) asparagine glycosylation. The chain crosses the membrane as a helical span at residues 529–549 (MFGTGIAMSTWVWTKATLLIW). An interaction with BBS5 and BBS7 region spans residues 542–573 (TKATLLIWRRTWCRLTGHSDDEPKRIKKSKMI). At 550–793 (RRTWCRLTGH…AEILDADSDF (244 aa)) the chain is on the cytoplasmic side. A phosphoserine mark is found at Ser560, Ser578, and Ser594. The required for interaction with PRKACA stretch occupies residues 574 to 657 (AKAFSKRREL…TPVPPEEQAN (84 aa)). The segment at 585–597 (QNPGQELSFSMHT) is interaction with DLG5. Thr597 is modified (phosphothreonine). Phosphoserine occurs at positions 599 and 642. Phosphothreonine occurs at positions 644 and 648. The residue at position 666 (Ser666) is a Phosphoserine. A compositionally biased stretch (basic residues) spans 674-684 (GRKKKRRKRKK). The disordered stretch occupies residues 674 to 703 (GRKKKRRKRKKEVCPLRPAPELHHSAPVPA).

It belongs to the G-protein coupled receptor Fz/Smo family. In terms of assembly, homodimer. Interacts (via C-terminus) with protein kinase A catalytic subunit PRKACA; interacts with free PRKACA subunits and the interaction leads to sequestration of PRKACA at the membrane, preventing PRKACA-mediated phosphorylation of GLI transcription factors. Interacts with ARRB2. Interacts with BBS5 and BBS7; the interactions are indicative for the association of SMO with the BBsome complex to facilitate ciliary localization of SMO. Interacts with KIF7, DLG5 and SDCBP. Interacts with GAS8/DRC4. In terms of processing, phosphorylation by GRK kinases is required for interaction with protein kinase A catalytic subunit PRKACA. As to expression, during early somite stages of embryonic development, modestly up-regulated in the cells of the node (at protein level).

The protein resides in the cell membrane. Its subcellular location is the cell projection. It is found in the cilium. Its function is as follows. G protein-coupled receptor which associates with the patched protein (PTCH) to transduce hedgehog protein signaling. Binding of sonic hedgehog (SHH) to its receptor patched prevents inhibition of smoothened (SMO) by patched. When active, SMO binds to and sequesters protein kinase A catalytic subunit PRKACA at the cell membrane, preventing PRKACA-mediated phosphorylation of GLI transcription factors which releases the GLI proteins from PRKACA-mediated inhibition and allows for transcriptional activation of hedgehog pathway target genes. Required for the accumulation of KIF7, GLI2 and GLI3 in the cilia. Interacts with DLG5 at the ciliary base to induce the accumulation of KIF7 and GLI2 at the ciliary tip for GLI2 activation. The protein is Protein smoothened (Smo) of Mus musculus (Mouse).